Reading from the N-terminus, the 638-residue chain is Trichohyalin-like protein 1 (638 aa).

Positions 49 to 84 constitute an EF-hand domain; the sequence is HVFHAVERKLNLLNFDRDGTISFEEFVLAIFSLLNP. Positions 134–638 are disordered; it reads SEMASSGQPS…ALEAESLEAQ (505 aa). The segment covering 166–179 has biased composition (polar residues); sequence LPRNVSEPNDPENQ. Basic and acidic residues-rich tracts occupy residues 221–246, 294–309, and 318–328; these read IPRE…QRPT, DDTK…KDAG, and EEPKADAKVAE. Residues 343–357 are compositionally biased toward polar residues; the sequence is DQSVQSRSRNVSETS. Composition is skewed to basic and acidic residues over residues 358–372, 395–409, 419–435, 479–490, 526–548, and 622–631; these read SRGE…HERI, REND…KDPS, EIKE…HSEE, RIQDKPVRKEDH, AEPH…KQES, and AGRENRKALE.

It belongs to the S-100 family.

The polypeptide is Trichohyalin-like protein 1 (Tchhl1) (Mus musculus (Mouse)).